A 377-amino-acid chain; its full sequence is Chaperone protein DnaJ (377 aa).

Positions 5–70 (DYYEILGVSK…QKRAAYDQYG (66 aa)) constitute a J domain. The segment at 132–210 (GVTKEIRIPT…CHGHGRVEKT (79 aa)) adopts a CR-type zinc-finger fold. The Zn(2+) site is built by C145, C148, C162, C165, C184, C187, C198, and C201. CXXCXGXG motif repeat units follow at residues 145–152 (CDVCHGSG), 162–169 (CPTCHGAG), 184–191 (CPHCQGRG), and 198–205 (CNKCHGHG).

The protein belongs to the DnaJ family. As to quaternary structure, homodimer. Zn(2+) serves as cofactor.

It is found in the cytoplasm. In terms of biological role, participates actively in the response to hyperosmotic and heat shock by preventing the aggregation of stress-denatured proteins and by disaggregating proteins, also in an autonomous, DnaK-independent fashion. Unfolded proteins bind initially to DnaJ; upon interaction with the DnaJ-bound protein, DnaK hydrolyzes its bound ATP, resulting in the formation of a stable complex. GrpE releases ADP from DnaK; ATP binding to DnaK triggers the release of the substrate protein, thus completing the reaction cycle. Several rounds of ATP-dependent interactions between DnaJ, DnaK and GrpE are required for fully efficient folding. Also involved, together with DnaK and GrpE, in the DNA replication of plasmids through activation of initiation proteins. The sequence is that of Chaperone protein DnaJ from Klebsiella pneumoniae subsp. pneumoniae (strain ATCC 700721 / MGH 78578).